The chain runs to 148 residues: Large ribosomal subunit protein bL9 (148 aa).

This sequence belongs to the bacterial ribosomal protein bL9 family.

In terms of biological role, binds to the 23S rRNA. The protein is Large ribosomal subunit protein bL9 of Bifidobacterium adolescentis (strain ATCC 15703 / DSM 20083 / NCTC 11814 / E194a).